The sequence spans 274 residues: Thiamine kinase (274 aa).

This sequence belongs to the thiamine kinase family.

The catalysed reaction is thiamine + ATP = thiamine phosphate + ADP + H(+). The protein operates within cofactor biosynthesis; thiamine diphosphate biosynthesis; thiamine phosphate from thiamine: step 1/1. Functionally, catalyzes the ATP-dependent phosphorylation of thiamine to thiamine phosphate. Is involved in thiamine salvage. The polypeptide is Thiamine kinase (Salmonella typhimurium (strain LT2 / SGSC1412 / ATCC 700720)).